A 368-amino-acid chain; its full sequence is Zinc finger protein 24 (368 aa).

A Glycyl lysine isopeptide (Lys-Gly) (interchain with G-Cter in SUMO2) cross-link involves residue Lys22. Lys27 participates in a covalent cross-link: Glycyl lysine isopeptide (Lys-Gly) (interchain with G-Cter in SUMO1); alternate. Lys27 is covalently cross-linked (Glycyl lysine isopeptide (Lys-Gly) (interchain with G-Cter in SUMO2); alternate). The region spanning 52-134 is the SCAN box domain; it reads RQRFRQFGYQ…TVLEDLESEL (83 aa). A phosphoserine mark is found at Ser132 and Ser142. Glycyl lysine isopeptide (Lys-Gly) (interchain with G-Cter in SUMO2) cross-links involve residues Lys147, Lys177, and Lys236. The C2H2-type 1 zinc-finger motif lies at 251-273; that stretch reads HICDECGKHFSQGSALILHQRIH. Residues 251–301 are necessary and sufficient for nuclear localization; the sequence is HICDECGKHFSQGSALILHQRIHSGEKPYGCVECGKAFSRSSILVQHQRVH. A Phosphoserine modification is found at Ser274. Residues Lys277 and Lys286 each participate in a glycyl lysine isopeptide (Lys-Gly) (interchain with G-Cter in SUMO2) cross-link. 3 consecutive C2H2-type zinc fingers follow at residues 279-301, 307-329, and 335-357; these read YGCVECGKAFSRSSILVQHQRVH, YKCLECGKAFSQNSGLINHQRIH, and YECVQCGKSYSQSSNLFRHXXRH. The residue at position 292 (Ser292) is a Phosphoserine. Position 335 is a phosphotyrosine (Tyr335). Residues Lys361 and Lys367 each participate in a glycyl lysine isopeptide (Lys-Gly) (interchain with G-Cter in SUMO2) cross-link.

It belongs to the krueppel C2H2-type zinc-finger protein family. Post-translationally, sumoylated.

The protein localises to the nucleus. Transcription factor required for myelination of differentiated oligodendrocytes. Required for the conversion of oligodendrocytes from the premyelinating to the myelinating state. In the developing central nervous system (CNS), involved in the maintenance in the progenitor stage by promoting the cell cycle. Specifically binds to the 5'-TCAT-3' DNA sequence. Has transcription repressor activity in vitro. This chain is Zinc finger protein 24 (ZNF24), found in Pan troglodytes (Chimpanzee).